Consider the following 178-residue polypeptide: Large ribosomal subunit protein uL6 (178 aa).

It belongs to the universal ribosomal protein uL6 family. Part of the 50S ribosomal subunit.

This protein binds to the 23S rRNA, and is important in its secondary structure. It is located near the subunit interface in the base of the L7/L12 stalk, and near the tRNA binding site of the peptidyltransferase center. The chain is Large ribosomal subunit protein uL6 from Streptococcus mutans serotype c (strain ATCC 700610 / UA159).